Here is an 805-residue protein sequence, read N- to C-terminus: Leucine--tRNA ligase (805 aa).

Residues 40–51 carry the 'HIGH' region motif; it reads PYPSGAGLHVGH. A 'KMSKS' region motif is present at residues 576–580; it reads KMSKS. Lys-579 is a binding site for ATP.

The protein belongs to the class-I aminoacyl-tRNA synthetase family.

It localises to the cytoplasm. The enzyme catalyses tRNA(Leu) + L-leucine + ATP = L-leucyl-tRNA(Leu) + AMP + diphosphate. This Geobacillus kaustophilus (strain HTA426) protein is Leucine--tRNA ligase.